Consider the following 290-residue polypeptide: Nucleotide-binding protein Xfasm12_0753 (290 aa).

13 to 20 (GLSGSGKS) provides a ligand contact to ATP. 65 to 68 (DIRS) lines the GTP pocket.

The protein belongs to the RapZ-like family.

In terms of biological role, displays ATPase and GTPase activities. The polypeptide is Nucleotide-binding protein Xfasm12_0753 (Xylella fastidiosa (strain M12)).